We begin with the raw amino-acid sequence, 460 residues long: MAGRAATSSAKWAREFLFRRVSSNPLGATRNCSSVPGASSAPKVPHFSKRGRILTGATIGLAIAGGAYVSTADEATFCGWLFNATKVVNPFFALLDAEFAHKLAVSAAARGWVPREKRPDPAILGLEVWGRKFSNPIGLAAGFDKNAEATEGLLGMGFGFVEVGSVTPVPQEGNPKPRIFRLSQEGAIINRCGFNSEGIVVVAKRLGAQHGKRMLAETSATSSSPSDDVKPGGKSGPGILGVNLGKNKTSEDAAADYVQGVHNLSQYADYLVINVSSPNTAGLRMLQGRKQLKDLVKKVQAARDEMQWGDEGPPPLLVKIAPDLSRGELEDIAAVALALHLDGLIISNTTVSRPDAVSNNPVATETGGLSGKPLFALSTNMLRDMYTLTRGKIPLIGCGGVSSGEDAYKKIRAGATLVQLYTGFAYGGPALIPQIKEELVKCLERDGFKSIHEAIGADHR.

The transit peptide at 1–32 (MAGRAATSSAKWAREFLFRRVSSNPLGATRNC) directs the protein to the mitochondrion. The chain crosses the membrane as a helical span at residues 53–69 (ILTGATIGLAIAGGAYV). FMN is bound by residues 141–145 (AGFDK) and S165. K145 contacts substrate. 190 to 194 (NRCGF) contributes to the substrate binding site. A disordered region spans residues 213–245 (RMLAETSATSSSPSDDVKPGGKSGPGILGVNLG). N243 and N274 together coordinate FMN. Residue 274–279 (NVSSPN) coordinates substrate. The Nucleophile role is filled by S277. FMN-binding residues include K319 and S347. 348–349 (NT) is a substrate binding site. FMN is bound by residues G371, G400, and 421-422 (YT).

Belongs to the dihydroorotate dehydrogenase family. Type 2 subfamily. It depends on FMN as a cofactor.

It localises to the mitochondrion inner membrane. It carries out the reaction (S)-dihydroorotate + a quinone = orotate + a quinol. The protein operates within pyrimidine metabolism; UMP biosynthesis via de novo pathway; orotate from (S)-dihydroorotate (quinone route): step 1/1. Functionally, catalyzes the conversion of dihydroorotate to orotate with quinone as electron acceptor. The sequence is that of Dihydroorotate dehydrogenase (quinone), mitochondrial (PYRD) from Arabidopsis thaliana (Mouse-ear cress).